Here is a 707-residue protein sequence, read N- to C-terminus: Terpene cyclase/mutase atnI (707 aa).

A compositionally biased stretch (polar residues) spans 1 to 20 (MGQHIASSESSTNGHVSLET). The disordered stretch occupies residues 1–22 (MGQHIASSESSTNGHVSLETNG). PFTB repeat units lie at residues 130-173 (AVEI…RLLG), 494-535 (LRDA…VGKT), 571-608 (TAQGLGFIKQSQKPDGGWYGAWGVCFTYAGMFALETLA), and 620-661 (SRRG…VQTA).

This sequence belongs to the terpene cyclase/mutase family.

Its pathway is secondary metabolite biosynthesis; terpenoid biosynthesis. Terpene cyclase/mutase; part of the gene cluster that mediates the biosynthesis of the meroterpenoids arthripenoids. The pathway begins with the HR-PKS atnH that catalyzes two chain-extension steps to form a reduced triketide, which then primes the SAT domain in the NR-PKS atnG to initiate three more cycles of extension to give a linear hexaketide corresponding to the polyketide part of arthripenoids. The FAD-dependent monooxygenase atnJ then performs an oxidative decarboxylation at C11 of the atnH/atnG product, via an electrophilic aromatic hydroxylation with concomitant ipso-decarboxylation. The membrane-bound polyprenyl transferase atnF then introduces a farnesyl group before the FAD-dependent monooxygenase atnK functions as the first epoxidase on terminal C12'-C13' olefin, followed by a second epoxidation on C7'-C8' catalyzed by atnA. The terpene cyclase/mutase atnI then initiates the sequential tricyclic ring formation through protonation of the terminal epoxide and catalyzes the regioselective and stereoselective 6/6/6-tricyclic ring formation. The cytochrome P450 monooxygenase atnM is responsible for hydroxylating both C1' and C10'. The next steps may involve ketoreduction and acetyl transfer by the ketoreductase atnB and the acetyltransferase atnC, and lead to the production of arthripenoid B, the final biosynthetic product of the atn cluster. The hydroquinone moiety in arthripenoid B is prone to undergo spontaneous oxidation to afford a benzoquinone compound, a key intermediate for generating structure diversity. For instance, addition of a cysteine followed by ring contraction gives arthripenoid A, tautomerization gives the main product arthripenoid C, addition of a molecular of water or amine affords arthripenoid D or E, respectively, and loss of one water forms arthripenoid F. The polypeptide is Terpene cyclase/mutase atnI (Arthrinium sp).